Reading from the N-terminus, the 155-residue chain is Fibroblast growth factor 1 (155 aa).

Ala-2 carries the post-translational modification N-acetylalanine. Residues 2-15 (AEGEITTFTALTEK) constitute a propeptide that is removed on maturation. A Nuclear localization signal motif is present at residues 24–27 (KKPK). Asn-33 is a binding site for heparin. The tract at residues 127 to 143 (KKNGSCKRGPRTHYGQK) is heparin-binding.

It belongs to the heparin-binding growth factors family. In terms of assembly, monomer. Homodimer. Interacts with FGFR1, FGFR2, FGFR3 and FGFR4. Affinity between fibroblast growth factors (FGFs) and their receptors is increased by heparan sulfate glycosaminoglycans that function as coreceptors. Found in a complex with FGFBP1, FGF1 and FGF2. Interacts with FGFBP1. Part of a Cu(2+)-dependent multiprotein aggregate containing FGF1, S100A13 and SYT1. Interacts with SYT1. Interacts with S100A13. Interacts with LRRC59. Interacts with CSNKA, CSNKB and FIBP. While binding with LRRC59, CSNKA and FIBP seem mutually exclusive, CSNKB and FIBP may cooperatively interact with FGF1. Forms a ternary complex with FGFR1 and ITGAV:ITGB3 and induces the recruitment of PTPN11 to the complex. Post-translationally, in the nucleus, phosphorylated by PKC/PRKCD. Predominantly expressed in kidney and brain. Detected at much lower levels in heart and skeletal muscle.

It localises to the secreted. The protein resides in the cytoplasm. It is found in the cell cortex. The protein localises to the cytosol. Its subcellular location is the nucleus. Plays an important role in the regulation of cell survival, cell division, angiogenesis, cell differentiation and cell migration. Functions as a potent mitogen in vitro. Acts as a ligand for FGFR1 and integrins. Binds to FGFR1 in the presence of heparin leading to FGFR1 dimerization and activation via sequential autophosphorylation on tyrosine residues which act as docking sites for interacting proteins, leading to the activation of several signaling cascades. Binds to integrin ITGAV:ITGB3. Its binding to integrin, subsequent ternary complex formation with integrin and FGFR1, and the recruitment of PTPN11 to the complex are essential for FGF1 signaling. Induces the phosphorylation and activation of FGFR1, FRS2, MAPK3/ERK1, MAPK1/ERK2 and AKT1. Can induce angiogenesis. This chain is Fibroblast growth factor 1 (FGF1), found in Homo sapiens (Human).